The following is a 493-amino-acid chain: 3-octaprenyl-4-hydroxybenzoate carboxy-lyase (493 aa).

Asn172 contacts Mn(2+). Residues 175 to 177 (IYR), 189 to 191 (RWL), and 194 to 195 (RG) contribute to the prenylated FMN site. Glu238 is a Mn(2+) binding site. The active-site Proton donor is Asp287.

It belongs to the UbiD family. Homohexamer. Prenylated FMN is required as a cofactor. Mn(2+) serves as cofactor.

The protein resides in the cell membrane. The enzyme catalyses a 4-hydroxy-3-(all-trans-polyprenyl)benzoate + H(+) = a 2-(all-trans-polyprenyl)phenol + CO2. It functions in the pathway cofactor biosynthesis; ubiquinone biosynthesis. Functionally, catalyzes the decarboxylation of 3-octaprenyl-4-hydroxy benzoate to 2-octaprenylphenol, an intermediate step in ubiquinone biosynthesis. The chain is 3-octaprenyl-4-hydroxybenzoate carboxy-lyase from Shewanella amazonensis (strain ATCC BAA-1098 / SB2B).